We begin with the raw amino-acid sequence, 290 residues long: Shikimate dehydrogenase (NADP(+)) (290 aa).

Shikimate-binding positions include 20-22 and T67; that span reads SLS. K71 acts as the Proton acceptor in catalysis. Positions 92 and 107 each coordinate shikimate. NADP(+) is bound by residues 130–134 and L227; that span reads GAGGA. Y229 contributes to the shikimate binding site. Position 250 (G250) interacts with NADP(+).

It belongs to the shikimate dehydrogenase family. In terms of assembly, homodimer.

It catalyses the reaction shikimate + NADP(+) = 3-dehydroshikimate + NADPH + H(+). Its pathway is metabolic intermediate biosynthesis; chorismate biosynthesis; chorismate from D-erythrose 4-phosphate and phosphoenolpyruvate: step 4/7. Its function is as follows. Involved in the biosynthesis of the chorismate, which leads to the biosynthesis of aromatic amino acids. Catalyzes the reversible NADPH linked reduction of 3-dehydroshikimate (DHSA) to yield shikimate (SA). The polypeptide is Shikimate dehydrogenase (NADP(+)) (Syntrophomonas wolfei subsp. wolfei (strain DSM 2245B / Goettingen)).